Here is a 414-residue protein sequence, read N- to C-terminus: Glutamyl-tRNA reductase (414 aa).

Substrate is bound by residues 49–52 (TCNR), Ser-108, 113–115 (EPQ), and Gln-119. The active-site Nucleophile is the Cys-50. 188 to 193 (GAGQTG) serves as a coordination point for NADP(+).

The protein belongs to the glutamyl-tRNA reductase family. In terms of assembly, homodimer.

It carries out the reaction (S)-4-amino-5-oxopentanoate + tRNA(Glu) + NADP(+) = L-glutamyl-tRNA(Glu) + NADPH + H(+). It participates in porphyrin-containing compound metabolism; protoporphyrin-IX biosynthesis; 5-aminolevulinate from L-glutamyl-tRNA(Glu): step 1/2. Catalyzes the NADPH-dependent reduction of glutamyl-tRNA(Glu) to glutamate 1-semialdehyde (GSA). This is Glutamyl-tRNA reductase from Francisella tularensis subsp. holarctica (strain LVS).